A 219-amino-acid chain; its full sequence is Dynein light chain Tctex-type 4 (219 aa).

The disordered stretch occupies residues 1 to 84; sequence MACRTLPSRR…RRPSLGPVPP (84 aa). A compositionally biased stretch (basic and acidic residues) spans 9 to 20; it reads RRQEEETTKDLA. Position 64 is a phosphoserine (serine 64).

This sequence belongs to the dynein light chain Tctex-type family. Interacts with ENG/endoglin, TGFBR2 and TGFBR3. Interacts with PPP1CC.

The protein localises to the cell projection. It localises to the cilium. It is found in the flagellum. The protein resides in the cytoplasmic vesicle. Its subcellular location is the secretory vesicle. The protein localises to the acrosome. It localises to the cytoplasm. It is found in the cytoskeleton. The protein resides in the cilium axoneme. Its subcellular location is the nucleus. The protein localises to the microtubule organizing center. This chain is Dynein light chain Tctex-type 4 (Dynlt4), found in Mus musculus (Mouse).